The chain runs to 154 residues: Avirulence protein ATR13 (154 aa).

The first 19 residues, M1–G19, serve as a signal peptide directing secretion. Residues R38–R41 carry the RxLR motif. Residues L50–I92 form a leucine heptad repeat region region. Residues E93 to K103 form a single repeat region region. The segment at N104 to Q154 is highly variable C-terminus domain.

This sequence belongs to the RxLR effector family.

Its subcellular location is the secreted. The protein resides in the host cytoplasm. In terms of biological role, secreted effector that acts as an elicitor of hypersensitive response (HR) specifically on plants carrying defense protein RPP13. Recognition of ATR13 by RPP13 initiates defense responses that are effective against oomycete, bacterial and viral pathogens. The allele ATR13-Emco5 recognizes RPP13-Nd, the RPP13 defense protein from Arabidopsis thaliana ecotype Niederzenz. The polypeptide is Avirulence protein ATR13 (Hyaloperonospora arabidopsidis (Peronospora arabidopsidis)).